A 412-amino-acid polypeptide reads, in one-letter code: MTTIAIFTKNVLLAIAFALFAQGAAIPDPAKRDDNPGFVALDFEVTRKPLDVNATSELSKRSSPSSPLYFEGPSYGIRVSVGSNKQEQQVVLDTGSSDFWVVDSSASCQKGNCKQYGTFDPHSSTSFKSLGSSFRSIGYGDKSSSIGTWGQDTIYLGGTSITNQRFADVTSTSVNQGILGVGRVETESANPPYDNVPITLKKQGKIKTNAYSLYLNSPGAATGTIIFGGVDNAKYSGKLIEEPLVSDRYLAVNLKSLNYNGDNSNAGFGVVVDSGTTISYLPDSIVNDLANKVGAYLEPVGLGNELYFIDCNANPQGSASFTFDNGAKITVPLSEFVLQSTANACVWGLQSSDRQNVPPILGDNFLRHAYAFQLDKETVLSRSGEVHFCLKCFSNLETSIVWKAFFYNRYIQ.

Positions 1 to 25 (MTTIAIFTKNVLLAIAFALFAQGAA) form a signal peptide, or 18, or 21. Positions 26–61 (IPDPAKRDDNPGFVALDFEVTRKPLDVNATSELSKR) are cleaved as a propeptide — activation peptide. N-linked (GlcNAc...) asparagine glycosylation occurs at Asn53. The region spanning 75 to 383 (YGIRVSVGSN…LDKETVLSRS (309 aa)) is the Peptidase A1 domain. Asp93 is a catalytic residue. Cys108 and Cys113 form a disulfide bridge. Asp273 is a catalytic residue. Residues Cys311 and Cys345 are joined by a disulfide bond.

This sequence belongs to the peptidase A1 family. Post-translationally, O-glycosylated.

It is found in the secreted. It carries out the reaction Preferential cleavage at the carboxyl of hydrophobic amino acids, but fails to cleave 15-Leu-|-Tyr-16, 16-Tyr-|-Leu-17 and 24-Phe-|-Phe-25 of insulin B chain. Activates trypsinogen, and degrades keratin.. The sequence is that of Candidapepsin-2 (SAPP2) from Candida parapsilosis (Yeast).